Reading from the N-terminus, the 404-residue chain is Tryptophan synthase beta chain (404 aa).

K99 carries the N6-(pyridoxal phosphate)lysine modification.

It belongs to the TrpB family. Tetramer of two alpha and two beta chains. Requires pyridoxal 5'-phosphate as cofactor.

It catalyses the reaction (1S,2R)-1-C-(indol-3-yl)glycerol 3-phosphate + L-serine = D-glyceraldehyde 3-phosphate + L-tryptophan + H2O. Its pathway is amino-acid biosynthesis; L-tryptophan biosynthesis; L-tryptophan from chorismate: step 5/5. In terms of biological role, the beta subunit is responsible for the synthesis of L-tryptophan from indole and L-serine. This chain is Tryptophan synthase beta chain, found in Rhizobium rhizogenes (strain K84 / ATCC BAA-868) (Agrobacterium radiobacter).